A 151-amino-acid polypeptide reads, in one-letter code: Flagellar assembly factor FliW (151 aa).

It belongs to the FliW family. Interacts with translational regulator CsrA and flagellin(s).

The protein resides in the cytoplasm. Acts as an anti-CsrA protein, binds CsrA and prevents it from repressing translation of its target genes, one of which is flagellin. Binds to flagellin and participates in the assembly of the flagellum. This chain is Flagellar assembly factor FliW, found in Natranaerobius thermophilus (strain ATCC BAA-1301 / DSM 18059 / JW/NM-WN-LF).